The primary structure comprises 110 residues: MQAALEVTARYCGRELEQYGQCVAAKPESWQRDCHYLKMSIAQCTSSHPIIRQIRQACAQPFEAFEECLRQNEAAVGNCAEHMRRFLQCAEQVQPPRSPATVEAQPLPAS.

Met-1 bears the N-acetylmethionine mark. CHCH domains are found at residues 9-52 (ARYC…PIIR) and 55-97 (RQAC…QPPR). Short sequence motifs (cx9C motif) lie at residues 12-22 (CGRELEQYGQC), 34-44 (CHYLKMSIAQC), 58-68 (CAQPFEAFEEC), and 79-89 (CAEHMRRFLQC). 4 disulfides stabilise this stretch: Cys-12-Cys-44, Cys-22-Cys-34, Cys-58-Cys-89, and Cys-68-Cys-79.

Monomer.

The protein resides in the mitochondrion intermembrane space. The polypeptide is Coiled-coil-helix-coiled-coil-helix domain-containing protein 5 (CHCHD5) (Homo sapiens (Human)).